The chain runs to 149 residues: Nucleoside diphosphate kinase (149 aa).

Residues Lys-9, Phe-57, Arg-85, Thr-91, Arg-102, and Asn-112 each contribute to the ATP site. His-115 (pros-phosphohistidine intermediate) is an active-site residue.

The protein belongs to the NDK family. Homotetramer. It depends on Mg(2+) as a cofactor.

The protein localises to the cytoplasm. It carries out the reaction dZDP + ATP = dZTP + ADP. It catalyses the reaction a 2'-deoxyribonucleoside 5'-diphosphate + ATP = a 2'-deoxyribonucleoside 5'-triphosphate + ADP. The enzyme catalyses a ribonucleoside 5'-diphosphate + ATP = a ribonucleoside 5'-triphosphate + ADP. The protein operates within purine metabolism. Its function is as follows. Major role in the synthesis of nucleoside triphosphates other than ATP. The ATP gamma phosphate is transferred to the NDP beta phosphate via a ping-pong mechanism, using a phosphorylated active-site intermediate. In terms of biological role, (Microbial infection) Catalyzes the phosphorylation of dZDP to dZTP, when the bacterium is infected by a phage that produces the substrate for the synthesis of dZTP (2- amino-2'-deoxyadenosine 5'-triphosphate), which is then used by the phage as a DNA polymerase substrate. The sequence is that of Nucleoside diphosphate kinase from Synechococcus elongatus (strain ATCC 33912 / PCC 7942 / FACHB-805) (Anacystis nidulans R2).